We begin with the raw amino-acid sequence, 239 residues long: Probable replication-associated protein repA2 (239 aa).

The protein belongs to the IncFII RepA family.

This protein is essential for plasmid replication; it is involved in copy control functions. In Buchnera aphidicola subsp. Baizongia pistaciae (strain Bp), this protein is Probable replication-associated protein repA2 (repA2).